A 999-amino-acid polypeptide reads, in one-letter code: Disks large-associated protein 1 (999 aa).

Disordered regions lie at residues 155–213, 395–418, and 918–989; these read HSLE…GYWS, MAED…ARRA, and NWRP…DSIE. Residues 194-204 show a composition bias toward basic and acidic residues; the sequence is RERCKSAEPKN. Basic and acidic residues-rich tracts occupy residues 923-932 and 947-965; these read DPPERKERRL and LARD…EARK. The segment covering 976-985 has biased composition (polar residues); that stretch reads VRQNSATESA. The PDZ-binding motif lies at 997–999; that stretch reads TRL.

This sequence belongs to the SAPAP family.

The protein resides in the cell membrane. It is found in the postsynaptic density. The protein localises to the synapse. Its function is as follows. Part of the postsynaptic scaffold in neuronal cells. In Danio rerio (Zebrafish), this protein is Disks large-associated protein 1.